A 533-amino-acid polypeptide reads, in one-letter code: uncharacterized protein (533 aa).

4 consecutive transmembrane segments (helical) span residues methionine 1–isoleucine 21, leucine 135–leucine 155, alanine 193–alanine 213, and leucine 472–glycine 492.

The protein localises to the cell membrane. This is an uncharacterized protein from Mycobacterium bovis (strain ATCC BAA-935 / AF2122/97).